We begin with the raw amino-acid sequence, 371 residues long: Putative ribonuclease 3 (371 aa).

An RNase III domain is found at 10 to 136 (AKSVKDKYIP…FLGAVCMAVD (127 aa)).

This sequence belongs to the IIV-6 142R family.

The catalysed reaction is Endonucleolytic cleavage to 5'-phosphomonoester.. Its function is as follows. Digests double-stranded RNA. The sequence is that of Putative ribonuclease 3 from Frog virus 3 (isolate Goorha) (FV-3).